The chain runs to 672 residues: ATP-dependent zinc metalloprotease FtsH 1 (672 aa).

The interval 1–22 (MKKDSESNSSDKSNKEELSTGR) is disordered. Over 1–23 (MKKDSESNSSDKSNKEELSTGRR) the chain is Cytoplasmic. Residues 24-44 (GGNPMIIALVITVLAAMLFFN) form a helical membrane-spanning segment. Over 45–141 (QPEPSSLISA…KFSPPDNTAA (97 aa)) the chain is Periplasmic. A helical membrane pass occupies residues 142 to 162 (ILNLLILVGLPLAIFFFIFMM). Residues 163 to 672 (IRRTRNDMMG…TSNASARRED (510 aa)) are Cytoplasmic-facing. ATP is bound at residue 237 to 244 (GPPGTGKT). A Zn(2+)-binding site is contributed by His-458. Glu-459 is an active-site residue. His-462 and Asp-534 together coordinate Zn(2+). A disordered region spans residues 642–672 (RLGDEEGKVEQIMAPEGAAERTSNASARRED). Residues 662–672 (RTSNASARRED) show a composition bias toward polar residues.

This sequence in the central section; belongs to the AAA ATPase family. In the C-terminal section; belongs to the peptidase M41 family. Homohexamer. Requires Zn(2+) as cofactor.

It is found in the cell inner membrane. Its function is as follows. Acts as a processive, ATP-dependent zinc metallopeptidase for both cytoplasmic and membrane proteins. Plays a role in the quality control of integral membrane proteins. The sequence is that of ATP-dependent zinc metalloprotease FtsH 1 from Rhodopirellula baltica (strain DSM 10527 / NCIMB 13988 / SH1).